The chain runs to 264 residues: Large ribosomal subunit protein uL2 (264 aa).

It belongs to the universal ribosomal protein uL2 family.

Its subcellular location is the cytoplasm. The protein is Large ribosomal subunit protein uL2 (RPL8) of Tetrahymena thermophila (strain SB210).